The sequence spans 66 residues: Type 3 secretion system chaperone YscE (66 aa).

The protein belongs to the YscE family. In terms of assembly, component of the heterodimeric YscE-YscG chaperone. The YscE-YscG chaperone forms a stable ternary complex with YscF/SctF.

Its subcellular location is the cytoplasm. Its function is as follows. Chaperone of the type III secretion system (T3SS), also called injectisome, which is used to inject bacterial effector proteins into eukaryotic host cells. Along with YscG, prevents premature polymerization of the YscF/SctF needle protein within the cytoplasm. Required for Yop secretion. This Yersinia enterocolitica protein is Type 3 secretion system chaperone YscE.